The following is a 301-amino-acid chain: Large ribosomal subunit protein uL18 (301 aa).

The span at N257–K271 shows a compositional bias: basic and acidic residues. The interval N257–T283 is disordered.

The protein belongs to the universal ribosomal protein uL18 family. Component of the large ribosomal subunit (LSU).

The protein localises to the cytoplasm. The protein resides in the nucleus. Component of the ribosome, a large ribonucleoprotein complex responsible for the synthesis of proteins in the cell. The small ribosomal subunit (SSU) binds messenger RNAs (mRNAs) and translates the encoded message by selecting cognate aminoacyl-transfer RNA (tRNA) molecules. The large subunit (LSU) contains the ribosomal catalytic site termed the peptidyl transferase center (PTC), which catalyzes the formation of peptide bonds, thereby polymerizing the amino acids delivered by tRNAs into a polypeptide chain. The nascent polypeptides leave the ribosome through a tunnel in the LSU and interact with protein factors that function in enzymatic processing, targeting, and the membrane insertion of nascent chains at the exit of the ribosomal tunnel. The polypeptide is Large ribosomal subunit protein uL18 (RPL5) (Tetrahymena thermophila (strain SB210)).